The following is a 151-amino-acid chain: MRIKLVAVGRLREEAYERACAEYARRLAAYARLELVEVRDARIADSRAGLLKEGQALLDQLHPGEHAVLLDSGGKQFTSVELADWLENHTVQEPVFIVGSSHGVAPMVRERAQMVWSLSKLTFPHELARVIVLEQLYRAVTILAGHPYHHG.

Residues Leu-70, Gly-99, and 118–123 (LSKLTF) each bind S-adenosyl-L-methionine.

This sequence belongs to the RNA methyltransferase RlmH family. As to quaternary structure, homodimer.

It localises to the cytoplasm. It carries out the reaction pseudouridine(1915) in 23S rRNA + S-adenosyl-L-methionine = N(3)-methylpseudouridine(1915) in 23S rRNA + S-adenosyl-L-homocysteine + H(+). Specifically methylates the pseudouridine at position 1915 (m3Psi1915) in 23S rRNA. The sequence is that of Ribosomal RNA large subunit methyltransferase H from Gloeobacter violaceus (strain ATCC 29082 / PCC 7421).